Reading from the N-terminus, the 183-residue chain is Dual-action ribosomal maturation protein DarP (183 aa).

The interval 1-23 (MTKQPDDWLDEVPDNENDDDDDE) is disordered. Residues 7 to 23 (DWLDEVPDNENDDDDDE) show a composition bias toward acidic residues.

It belongs to the DarP family.

The protein localises to the cytoplasm. Functionally, member of a network of 50S ribosomal subunit biogenesis factors which assembles along the 30S-50S interface, preventing incorrect 23S rRNA structures from forming. Promotes peptidyl transferase center (PTC) maturation. In Cronobacter sakazakii (strain ATCC BAA-894) (Enterobacter sakazakii), this protein is Dual-action ribosomal maturation protein DarP.